The following is a 255-amino-acid chain: Phosphoribosyl isomerase A (255 aa).

Asp21 acts as the Proton acceptor in catalysis. Catalysis depends on Asp140, which acts as the Proton donor.

Belongs to the HisA/HisF family.

The protein resides in the cytoplasm. The catalysed reaction is 1-(5-phospho-beta-D-ribosyl)-5-[(5-phospho-beta-D-ribosylamino)methylideneamino]imidazole-4-carboxamide = 5-[(5-phospho-1-deoxy-D-ribulos-1-ylimino)methylamino]-1-(5-phospho-beta-D-ribosyl)imidazole-4-carboxamide. The enzyme catalyses N-(5-phospho-beta-D-ribosyl)anthranilate = 1-(2-carboxyphenylamino)-1-deoxy-D-ribulose 5-phosphate. It functions in the pathway amino-acid biosynthesis; L-histidine biosynthesis; L-histidine from 5-phospho-alpha-D-ribose 1-diphosphate: step 4/9. The protein operates within amino-acid biosynthesis; L-tryptophan biosynthesis; L-tryptophan from chorismate: step 3/5. Functionally, involved in both the histidine and tryptophan biosynthetic pathways. The sequence is that of Phosphoribosyl isomerase A from Mycolicibacterium vanbaalenii (strain DSM 7251 / JCM 13017 / BCRC 16820 / KCTC 9966 / NRRL B-24157 / PYR-1) (Mycobacterium vanbaalenii).